A 103-amino-acid chain; its full sequence is Integration host factor subunit alpha (103 aa).

Residues 55–74 (CREKPQRPGRNPKTGEEMPI) are disordered.

The protein belongs to the bacterial histone-like protein family. In terms of assembly, heterodimer of an alpha and a beta chain.

Functionally, this protein is one of the two subunits of integration host factor, a specific DNA-binding protein that functions in genetic recombination as well as in transcriptional and translational control. The sequence is that of Integration host factor subunit alpha from Thiobacillus denitrificans (strain ATCC 25259 / T1).